Reading from the N-terminus, the 541-residue chain is Tyrosine-protein phosphatase non-receptor type 5 (541 aa).

Residues 1–55 form a disordered region; that stretch reads MCCSERLLGLPQPVEMEAPDEAEGLPSKQKEMPPPPPPSPPSEPAQKLPPQGAGS. The segment covering 32 to 43 has biased composition (pro residues); it reads MPPPPPPSPPSE. 2 helical membrane-spanning segments follow: residues 64–84 and 122–142; these read LCLF…LSGH and LLLV…WHLL. Ser221 carries the phosphoserine; by PKA modification. Thr231 carries the phosphothreonine; by MAPK modification. Phosphoserine; by MAPK is present on Ser244. Positions 276-531 constitute a Tyrosine-protein phosphatase domain; it reads LQAEFFEIPM…QFVHHAMSLY (256 aa). Residues Asp437, 472–478, and Gln516 contribute to the substrate site; that span reads CSAGIGR. Cys472 acts as the Phosphocysteine intermediate in catalysis.

The protein belongs to the protein-tyrosine phosphatase family. Non-receptor class subfamily. In terms of processing, phosphorylation at Ser-221 by PKA deactivates PTPN5. Phosphorylation at Thr-231 and Ser-244 by MAPKs stabilizes the phosphatase, dephosphorylation of these sites results in ubiquitin-mediated degradation of the active phosphatase. In terms of tissue distribution, STEP20 is expressed only in the CNS.

It is found in the endoplasmic reticulum membrane. The protein localises to the cytoplasm. The enzyme catalyses O-phospho-L-tyrosyl-[protein] + H2O = L-tyrosyl-[protein] + phosphate. Functionally, may regulate the activity of several effector molecules involved in synaptic plasticity and neuronal cell survival, including MAPKs, Src family kinases and NMDA receptors. This chain is Tyrosine-protein phosphatase non-receptor type 5 (Ptpn5), found in Mus musculus (Mouse).